A 1023-amino-acid chain; its full sequence is RTX-I toxin determinant A from serotypes 5/10 (1023 aa).

A run of 3 helical transmembrane segments spans residues 226–256, 297–326, and 367–406; these read NNLPDLSLAGPGFDAVSGILSVVSASFILSN, STTAATGGLIGSVVALAISPLSFLNVADKF, and INSVLSAASAGVGAAATGSLVGAPVAALVSAITGIISGIL. Hemolysin-type calcium-binding repeat units lie at residues 730-747, 748-765, 766-783, 784-801, 812-829, and 830-847; these read FGSRFTDIFHGAKGDDEI, YGNDGHDILYGDDGNDVI, HGGDGNDHLVGGNGNDRL, IGGKGNNFLNGGDGDDEL, LGGAGNDILYGSDGTNLF, and DGGVGNDKIYGGLGKDIY.

It belongs to the RTX prokaryotic toxin (TC 1.C.11) family. Palmitoylated by ApxIC. The toxin only becomes active when modified.

It is found in the secreted. The protein resides in the host cell membrane. In terms of biological role, one of the virulence factors of A.pleuropneumoniae, which has a strong hemolytic activity and is cytotoxic for alveolar macrophages and neutrophils. This Actinobacillus pleuropneumoniae (Haemophilus pleuropneumoniae) protein is RTX-I toxin determinant A from serotypes 5/10 (apxIA).